Here is a 200-residue protein sequence, read N- to C-terminus: Max dimerization protein 3 (200 aa).

Disordered regions lie at residues 31 to 56 (SILP…DNVR) and 133 to 164 (RLLP…QEDL). The 53-residue stretch at 54-106 (NVRSVHNELEKHRRAQLRRCLEQLKQQVPLSMENSRHTTLSLLHRAKQHIKKL) folds into the bHLH domain.

As to quaternary structure, efficient DNA binding requires dimerization with another bHLH protein. Binds DNA as a heterodimer with MAX. In terms of tissue distribution, expressed broadly throughout the CNS and the eye, starting at neurula stages.

It localises to the nucleus. Transcriptional repressor. Binds with MAX to form a sequence-specific DNA-binding protein complex which recognizes the core sequence 5'-CAC[GA]TG-3'. This is Max dimerization protein 3 (mxd3) from Xenopus laevis (African clawed frog).